The following is a 146-amino-acid chain: Probable calcium-binding protein CML40 (146 aa).

The 36-residue stretch at 7 to 42 folds into the EF-hand 1 domain; that stretch reads NKRDEYQRVFSCFDKSHQGKVSVSTIERCVDAIKSG. Residues 44 to 65 form a disordered region; sequence RAVVDQEDTTNPNPEESTDDKS. One can recognise an EF-hand 2 domain in the interval 116–146; it reads KSLKDCEVMISQFDINRDGIINFDEFRAMMQ. Residues D129, N131, D133, and E140 each coordinate Ca(2+).

Potential calcium sensor. The chain is Probable calcium-binding protein CML40 (CML40) from Arabidopsis thaliana (Mouse-ear cress).